The chain runs to 316 residues: ADDLTTLRNGTLDRGITPDCTFNEKDIELHVYSRDKRNGIILKKEILKNYDLFQKSQISHQIAILIHGFLSTGNNENFDAMAKALIEIDNFLVISVDWKKGACNAFASTNDVLGYSQAVGNTRHVGKYVADFTKLLVEQYKVPMSNIRLIGHSLGAHTSGFAGKEVQRLKLGKYKEIIGLDPAGPSFLTNKCPNRLCETDAEYVQAIHTSAILGVYYNVGSVDFYVNYGKSQPGCSEPSCSHTKAVKYLTECIKRECCLIGTPWKSYFSTPKPISQCKRDTCVCVGLNAQSYPAKGSFYVPVEKDAPYCHNEGIKL.

Residues 1–4 (ADDL) form the signal peptide. A propeptide spanning residues 5–14 (TTLRNGTLDR) is cleaved from the precursor. A disulfide bridge connects residues Cys20 and Cys103. Catalysis depends on Ser153, which acts as the Nucleophile. Asp181 acts as the Charge relay system in catalysis. 2 disulfide bridges follow: Cys192–Cys197 and Cys235–Cys240. His242 serves as the catalytic Charge relay system. 3 cysteine pairs are disulfide-bonded: Cys257/Cys284, Cys258/Cys309, and Cys277/Cys282.

This sequence belongs to the AB hydrolase superfamily. Lipase family. Expressed by the venom gland.

Its subcellular location is the secreted. It catalyses the reaction a 1,2-diacyl-sn-glycero-3-phosphocholine + H2O = a 2-acyl-sn-glycero-3-phosphocholine + a fatty acid + H(+). Catalyzes the hydrolysis of phosphatidylcholine with phospholipase A1 activity. May act as an allergen and induce hemolytic activity. This Polistes dominula (European paper wasp) protein is Phospholipase A1 2.